A 2290-amino-acid polypeptide reads, in one-letter code: Protein Ycf2 (2290 aa).

1638 to 1645 (GSIGTGRS) lines the ATP pocket.

Belongs to the Ycf2 family.

The protein localises to the plastid. It is found in the chloroplast stroma. Probable ATPase of unknown function. Its presence in a non-photosynthetic plant (Epifagus virginiana) and experiments in tobacco indicate that it has an essential function which is probably not related to photosynthesis. This is Protein Ycf2 from Phalaenopsis aphrodite subsp. formosana (Moth orchid).